The following is a 109-amino-acid chain: UPF0122 protein BH2485 (109 aa).

This sequence belongs to the UPF0122 family.

Functionally, might take part in the signal recognition particle (SRP) pathway. This is inferred from the conservation of its genetic proximity to ftsY/ffh. May be a regulatory protein. The polypeptide is UPF0122 protein BH2485 (Halalkalibacterium halodurans (strain ATCC BAA-125 / DSM 18197 / FERM 7344 / JCM 9153 / C-125) (Bacillus halodurans)).